A 360-amino-acid chain; its full sequence is Photosystem II protein D1 (360 aa).

Residues 1–28 (MTTTLQRRESANLWERFCNWVTSTDNRL) lie on the Cytoplasmic side of the membrane. A helical membrane pass occupies residues 29-46 (YVGWFGVIMIPTLLAATI). Over 47–117 (CFVIAFIAAP…NGGPYQLIIF (71 aa)) the chain is Lumenal. H118 provides a ligand contact to chlorophyll a. Residues 118-133 (HFLLGASCYMGRQWEL) form a helical membrane-spanning segment. Pheophytin a is bound by residues Y126 and Q130. The Cytoplasmic segment spans residues 134-141 (SYRLGMRP). Residues 142–156 (WICVAYSAPLASAFA) form a helical membrane-spanning segment. Y147 provides a ligand contact to pheophytin a. Over 157-196 (VFLIYPIGQGSFSDGMPLGISGTFNFMIVFQAEHNILMHP) the chain is Lumenal. [CaMn4O5] cluster-binding residues include D170 and E189. A helical membrane pass occupies residues 197-218 (FHQLGVAGVFGGALFCAMHGSL). Position 198 (H198) interacts with chlorophyll a. Residue M214 coordinates pheophytin a. A quinone-binding positions include H215 and 264–265 (SF). H215 is a Fe cation binding site. The Cytoplasmic segment spans residues 219–273 (VTSSLIRETTETESANYGYKFGQEEETYNIVAAHGYFGRLIFQYASFNNSRSLHF). H272 serves as a coordination point for Fe cation. A helical transmembrane segment spans residues 274 to 288 (FLAAWRVVGVWFAAL). Residues 289 to 360 (GISTMAFNLN…VAMIAPSING (72 aa)) are Lumenal-facing. Positions 332, 333, 342, and 344 each coordinate [CaMn4O5] cluster. A propeptide spanning residues 345–360 (SAESAPVAMIAPSING) is cleaved from the precursor.

It belongs to the reaction center PufL/M/PsbA/D family. In terms of assembly, PSII is composed of 1 copy each of membrane proteins PsbA, PsbB, PsbC, PsbD, PsbE, PsbF, PsbH, PsbI, PsbJ, PsbK, PsbL, PsbM, PsbT, PsbX, PsbY, PsbZ, Psb30/Ycf12, peripheral proteins PsbO, CyanoQ (PsbQ), PsbU, PsbV and a large number of cofactors. It forms dimeric complexes. Requires The D1/D2 heterodimer binds P680, chlorophylls that are the primary electron donor of PSII, and subsequent electron acceptors. It shares a non-heme iron and each subunit binds pheophytin, quinone, additional chlorophylls, carotenoids and lipids. D1 provides most of the ligands for the Mn4-Ca-O5 cluster of the oxygen-evolving complex (OEC). There is also a Cl(-1) ion associated with D1 and D2, which is required for oxygen evolution. The PSII complex binds additional chlorophylls, carotenoids and specific lipids. as cofactor. Post-translationally, C-terminally processed by CtpA; processing is essential to allow assembly of the oxygen-evolving complex and thus photosynthetic growth. Tyr-161 forms a radical intermediate that is referred to as redox-active TyrZ, YZ or Y-Z.

The protein resides in the cellular thylakoid membrane. It catalyses the reaction 2 a plastoquinone + 4 hnu + 2 H2O = 2 a plastoquinol + O2. Photosystem II (PSII) is a light-driven water:plastoquinone oxidoreductase that uses light energy to abstract electrons from H(2)O, generating O(2) and a proton gradient subsequently used for ATP formation. It consists of a core antenna complex that captures photons, and an electron transfer chain that converts photonic excitation into a charge separation. The D1/D2 (PsbA/PsbD) reaction center heterodimer binds P680, the primary electron donor of PSII as well as several subsequent electron acceptors. This is Photosystem II protein D1 from Thermostichus vulcanus (Synechococcus vulcanus).